Reading from the N-terminus, the 498-residue chain is MRINPTTSGSGVSTLEKKTLGRIVQIIGPVLDVAFPPGKMPNIYNALVVKGRDTVGQQINVTCEVQQLLGNNRVRAVAMSATDGLMRGMEVIDTGAPLSVPVGGATLGRIFNVLGEPVDNLGPVDTRTTSPIHRSAPAFIQLDTKLSIFETGIKVVDLLAPYRRGGKIGLFGGAGVGKTVLIMELINNIAKAHGGVSVFGGVGERTREGNDLYMEMKESGVINEQNIAESKVALVHGQMNEPPGARMRVGLTALTMAEYFRDVNEQDVLLFIDNIFRFVQAGSEVSALLGRMPSAVGYQPTLSTEMGSLQERITSTKEGSITSIQAVYVPADDLTDPAPATTFAHLDATTVLSRGLAAKGIYPAVDPLDSTSTMLQPRIVGEEHYEIAQRVKQTSQRYKELQDIIAILGLDELSEEDRLTVARARKIERFLSQPFFVAEVFTGSPGKYVGLAETIRGFQLILSGELDGLPEQAFYLVGNIDEATAKAMNLEVESTLKK.

Residue Gly172–Thr179 participates in ATP binding.

The protein belongs to the ATPase alpha/beta chains family. As to quaternary structure, F-type ATPases have 2 components, CF(1) - the catalytic core - and CF(0) - the membrane proton channel. CF(1) has five subunits: alpha(3), beta(3), gamma(1), delta(1), epsilon(1). CF(0) has four main subunits: a(1), b(1), b'(1) and c(9-12).

It localises to the plastid. The protein resides in the chloroplast thylakoid membrane. The catalysed reaction is ATP + H2O + 4 H(+)(in) = ADP + phosphate + 5 H(+)(out). Functionally, produces ATP from ADP in the presence of a proton gradient across the membrane. The catalytic sites are hosted primarily by the beta subunits. This chain is ATP synthase subunit beta, chloroplastic, found in Calycanthus floridus (Eastern sweetshrub).